A 388-amino-acid polypeptide reads, in one-letter code: FBD-associated F-box protein At5g60610 (388 aa).

In terms of domain architecture, F-box spans 1–47; the sequence is MDRISGLPDELLVKIISFVPTKVAVSTSILSKRWESLWKWVPKLECD. Residues 337–388 enclose the FBD domain; sequence NWKNIQRSVPKCLKSSLKTLEFAGYTARPEERDFLSFIFKKARCLKTSSISH.

This chain is FBD-associated F-box protein At5g60610, found in Arabidopsis thaliana (Mouse-ear cress).